Consider the following 330-residue polypeptide: GTPase Obg (330 aa).

An Obg domain is found at 1-159 (MQFIDQARIT…WPLQLELKLL (159 aa)). The OBG-type G domain occupies 160 to 328 (AEVGIIGLPN…LLERVWKELG (169 aa)). ATP contacts are provided by residues 166-173 (GLPNAGKS), 191-195 (FTTLV), 213-216 (DIPG), 280-283 (NKQE), and 309-311 (SAA). Residues Ser173 and Thr193 each coordinate Mg(2+).

It belongs to the TRAFAC class OBG-HflX-like GTPase superfamily. OBG GTPase family. Monomer. It depends on Mg(2+) as a cofactor.

The protein resides in the cytoplasm. An essential GTPase which binds GTP, GDP and possibly (p)ppGpp with moderate affinity, with high nucleotide exchange rates and a fairly low GTP hydrolysis rate. Plays a role in control of the cell cycle, stress response, ribosome biogenesis and in those bacteria that undergo differentiation, in morphogenesis control. The chain is GTPase Obg from Parasynechococcus marenigrum (strain WH8102).